The sequence spans 214 residues: Thymidylate kinase (214 aa).

10 to 17 contributes to the ATP binding site; that stretch reads GGEGAGKS.

This sequence belongs to the thymidylate kinase family.

It carries out the reaction dTMP + ATP = dTDP + ADP. Its function is as follows. Phosphorylation of dTMP to form dTDP in both de novo and salvage pathways of dTTP synthesis. This chain is Thymidylate kinase, found in Brucella abortus (strain S19).